Reading from the N-terminus, the 22-residue chain is Unknown endosperm protein L (22 aa).

Positions 1–11 (MRHSNKIRDEE) are enriched in basic and acidic residues. Residues 1–22 (MRHSNKIRDEEMVNNTRLNXXA) are disordered. The span at 13 to 22 (VNNTRLNXXA) shows a compositional bias: polar residues.

The N-terminus is blocked.

The sequence is that of Unknown endosperm protein L from Hordeum vulgare (Barley).